Here is a 747-residue protein sequence, read N- to C-terminus: Histone-lysine N-methyltransferase EZH1 (747 aa).

The tract at residues 188-231 (DEEEEGHNDTSDGKQDDSKEDLPVTRKRKRHAIEGNKKSSKKQF) is disordered. A compositionally biased stretch (basic and acidic residues) spans 194–211 (HNDTSDGKQDDSKEDLPV). K327 participates in a covalent cross-link: Glycyl lysine isopeptide (Lys-Gly) (interchain with G-Cter in SUMO2). The segment at 378 to 421 (SAVAETKEGDSDRDTGNDWASSSSEANSRCQTPTKQKASPAPPQ) is disordered. Over residues 382–393 (ETKEGDSDRDTG) the composition is skewed to basic and acidic residues. Polar residues predominate over residues 395-414 (DWASSSSEANSRCQTPTKQK). A Nuclear localization signal motif is present at residues 491–496 (QKKKRK). A CXC domain is found at 504–606 (CRKIQLKKDN…CKVVSCKNCS (103 aa)). The region spanning 613 to 728 (KHLLLAPSDV…AGEELFLDYR (116 aa)) is the SET domain.

The protein belongs to the class V-like SAM-binding methyltransferase superfamily. Histone-lysine methyltransferase family. EZ subfamily. In terms of assembly, component of the PRC2/EED-EZH1 complex, which includes EED, EZH1, SUZ12, RBBP4 and AEBP2. The PRC2/EED-EZH1 is less abundant than the PRC2/EED-EZH2 complex, has weak methyltransferase activity and compacts chromatin in the absence of the methyltransferase cofactor S-adenosyl-L-methionine (SAM). Interacts with EZHIP; the interaction blocks EZH1 methyltransferase activity.

The protein localises to the nucleus. The catalysed reaction is L-lysyl(27)-[histone H3] + 3 S-adenosyl-L-methionine = N(6),N(6),N(6)-trimethyl-L-lysyl(27)-[histone H3] + 3 S-adenosyl-L-homocysteine + 3 H(+). In terms of biological role, polycomb group (PcG) protein. Catalytic subunit of the PRC2/EED-EZH1 complex, which methylates 'Lys-27' of histone H3, leading to transcriptional repression of the affected target gene. Able to mono-, di- and trimethylate 'Lys-27' of histone H3 to form H3K27me1, H3K27me2 and H3K27me3, respectively. Required for embryonic stem cell derivation and self-renewal, suggesting that it is involved in safeguarding embryonic stem cell identity. Compared to EZH2-containing complexes, it is less abundant in embryonic stem cells, has weak methyltransferase activity and plays a less critical role in forming H3K27me3, which is required for embryonic stem cell identity and proper differentiation. In Pongo abelii (Sumatran orangutan), this protein is Histone-lysine N-methyltransferase EZH1 (EZH1).